We begin with the raw amino-acid sequence, 490 residues long: Protein twist (490 aa).

3 disordered regions span residues 48-72 (QLQH…QHAQ), 96-165 (PSNE…TGGS), and 244-264 (QQQQ…HAQM). Positions 54-68 (QHLHSHQHHQQHHQQ) are enriched in basic residues. Low complexity-rich tracts occupy residues 102 to 134 (STSS…NPSG) and 244 to 263 (QQQQ…SHAQ). A phosphoserine mark is found at Ser-325 and Ser-328. Residues 330–361 (LDGSDAGGKAFRKPRRRLKRKPSKTEETDEFS) are disordered. A compositionally biased stretch (basic residues) spans 339–351 (AFRKPRRRLKRKP). The 52-residue stretch at 362–413 (NQRVMANVRERQRTQSLNDAFKSLQQIIPTLPSDKLSKIQTLKLATRYIDFL) folds into the bHLH domain.

In terms of assembly, efficient DNA binding requires dimerization with another bHLH protein. Homodimer. Interacts with akirin. Expressed in embryonic abdomen; a single cell ventrally, pairs of cells laterally and three cells dorsally in each hemisegment. In the thorax, there are patches of cells associated with the imaginal disks. During larval development, cells proliferate and, in the abdomen, they form ventral, lateral and dorsal clusters, which are the precursors of the adult abdominal muscles. In the thorax, they form populations of cells in the imaginal disks that correspond to the adepithelial cells.

The protein resides in the nucleus. Functionally, involved in the establishment and dorsoventral patterning of germ layers in the embryo. This is Protein twist (twi) from Drosophila melanogaster (Fruit fly).